Here is a 359-residue protein sequence, read N- to C-terminus: Decorin (359 aa).

A signal peptide spans 1–16 (MKATIILLLLAQVSWA). Residues 17-30 (GPFQQRGLFDFMLE) constitute a propeptide that is removed on maturation. Ser34 is a glycosylation site (O-linked (Xyl...) (glycosaminoglycan) serine). Intrachain disulfides connect Cys54–Cys60 and Cys58–Cys67. LRR repeat units follow at residues 73 to 93 (DKVPKDLPPDTTLLDLQNNKI), 94 to 117 (TEIKDGDFKNLKNLHALILVNNKI), 118 to 141 (SKVSPGAFTPLVKLERLYLSKNQL), 142 to 162 (KELPEKMPKTLQELRAHENEI), 163 to 186 (TKVRKVTFNGLNQMIVIELGTNPL), 187 to 212 (KSSGIENGAFQGMKKLSYIRIADTNI), 213 to 233 (TSIPQGLPPSLTELHLDGNKI), 234 to 257 (SRVDAASLKGLNNLAKLGLSFNSI), 258 to 281 (SAVDNGSLANTPHLRELHLDNNKL), 282 to 304 (TRVPGGLAEHKYIQVVYLHNNNI), 305 to 334 (SVVGSSDFCPPGHNTKKASYSGVSLFSNPV), and 335 to 359 (QYWEIQPSTFRCVYVRSAIQLGNYK). An N-linked (GlcNAc...) asparagine glycan is attached at Asn211. N-linked (GlcNAc...) asparagine glycans are attached at residues Asn262 and Asn303. A disulfide bridge connects residues Cys313 and Cys346.

It belongs to the small leucine-rich proteoglycan (SLRP) family. SLRP class I subfamily. In terms of assembly, binds to type I and type II collagen, fibronectin and TGF-beta. Forms a ternary complex with MFAP2 and ELN. Interacts with DPT. The attached glycosaminoglycan chain can be either chondroitin sulfate or dermatan sulfate depending upon the tissue of origin. As to expression, detected in placenta (at protein level). Detected in cerebrospinal fluid, fibroblasts and urine (at protein level).

Its subcellular location is the secreted. The protein resides in the extracellular space. The protein localises to the extracellular matrix. In terms of biological role, may affect the rate of fibrils formation. In Homo sapiens (Human), this protein is Decorin (DCN).